A 1229-amino-acid polypeptide reads, in one-letter code: MTSNRKNENEIINALSIPTVSNPSTQMNLSPDARIEDSLCVAEVNNIDPFVSASTVQTGINIAGRILGVLGVPFAGQLASFYSFLVGELWPSGRDPWEIFLEHVEQLIRQQVTENTRNTAIARLEGLGRGYRSYQQALETWLDNRNDARSRSIILERYVALELDITTAIPLFRIRNEEVPLLMVYAQAANLHLLLLRDASLFGSEWGMASSDVNQYYQEQIRYTEEYSNHCVQWYNTGLNNLRGTNAESWLRYNQFRRDLTLGVLDLVALFPSYDTRTYPINTSAQLTREIYTDPIGRTNAPSGFASTNWFNNNAPSFSAIEAAIFRPPHLLDFPEQLTIYSASSRWSSTQHMNYWVGHRLNFRPIGGTLNTSTQGLTNNTSINPVTLQFTSRDVYRTESNAGTNILFTTPVNGVPWARFNFINPQNIYERGATTYSQPYQGVGIQLFDSETELPPETTERPNYESYSHRLSHIGLIIGNTLRAPVYSWTHRSADRTNTIGPNRITQIPLVKALNLHSGVTVVGGPGFTGGDILRRTNTGTFGDIRLNINVPLSQRYRVRIRYASTTDLQFFTRINGTTVNIGNFSRTMNRGDNLEYRSFRTAGFSTPFNFLNAQSTFTLGAQSFSNQEVYIDRVEFVPAEVTFEAEYDLERAQKAVNALFTSTNPRRLKTDVTDYHIDQVSNMVACLSDEFCLDEKRELFEKVKYAKRLSDERNLLQDPNFTFISGQLSFASIDGQSNFPSINELSEHGWWGSANVTIQEGNDVFKENYVTLPGTFNECYPNYLYQKIGESELKAYTRYQLRGYIEDSQDLEIYLIRYNAKHETLDVPGTDSLWPLSVESPIGRCGEPNRCAPHFEWNPDLDCSCRDGERCAHHSHHFTLDIDVGCTDLHENLGVWVVFKIKTQEGYARLGNLEFIEEKPLIGEALSRVKRAEKKWRDKREKLQLETKRVYTEAKEAVDALFVDSQYDQLQADTNIGMIHAADKLVHRIREAYLSELPVIPGVNAEIFEELEGHIITAMSLYDARNVVKNGDFNNGLTCWNVKGHVDVQQSHHRSDLVIPEWEAEVSQAVRVCPGRGYILRVTAYKEGYGEGCVTIHEIENNTDELKFKNCEEEEVYPTDTGTCNDYTAHQGTAACNSRNAGYEDAYEVDTTASVNYKPTYEEETYTDVRRDNHCEYDRGYVNYPPVPAGYVTKELEYFPETDTVWIEIGETEGKFIVDSVELLLMEE.

This sequence belongs to the delta endotoxin family.

Its function is as follows. Promotes colloidosmotic lysis by binding to the midgut epithelial cells of many lepidopteran larvae. The polypeptide is Pesticidal crystal protein Cry1Bb (cry1Bb) (Bacillus thuringiensis).